A 453-amino-acid polypeptide reads, in one-letter code: Bis(5'-adenosyl)-triphosphatase ENPP4 (453 aa).

The N-terminal stretch at 1 to 18 is a signal peptide; it reads MKLLLMLLFSGLMTGCRG. At 19–407 the chain is on the extracellular side; sequence NSSSASPPKL…DQWCINLPEA (389 aa). Zn(2+)-binding residues include Asp-34 and Thr-70. The active-site AMP-threonine intermediate is the Thr-70. Residues Asn-91 and Tyr-154 each coordinate substrate. N-linked (GlcNAc...) asparagine glycosylation occurs at Asn-166. Zn(2+) is bound by residues Asp-189, His-193, Asp-237, and His-238. Asp-189 is a substrate binding site. Cys-254 and Cys-287 form a disulfide bridge. N-linked (GlcNAc...) asparagine glycosylation occurs at Asn-276. Zn(2+) is bound at residue His-336. The cysteines at positions 394 and 401 are disulfide-linked. The chain crosses the membrane as a helical span at residues 408-428; the sequence is IGIVIGALLVLTTLTCLIIIM. The Cytoplasmic segment spans residues 429–453; sequence QNRVSGPRPFSRLQLQEDDDDPLIG.

It belongs to the nucleotide pyrophosphatase/phosphodiesterase family. Zn(2+) serves as cofactor.

It localises to the cell membrane. The enzyme catalyses P(1),P(3)-bis(5'-adenosyl) triphosphate + H2O = AMP + ADP + 2 H(+). Functionally, hydrolyzes extracellular Ap3A into AMP and ADP, and Ap4A into AMP and ATP. Ap3A and Ap4A are diadenosine polyphosphates thought to induce proliferation of vascular smooth muscle cells. Acts as a procoagulant, mediating platelet aggregation at the site of nascent thrombus via release of ADP from Ap3A and activation of ADP receptors. The polypeptide is Bis(5'-adenosyl)-triphosphatase ENPP4 (ENPP4) (Bos taurus (Bovine)).